The primary structure comprises 330 residues: DNA-directed RNA polymerase I subunit RPA43 (330 aa).

Positions 251–330 are disordered; it reads ADVTDVTPQE…ANFESPKKRQ (80 aa). Serine 306, serine 318, and serine 325 each carry phosphoserine. A compositionally biased stretch (basic and acidic residues) spans 317–330; the sequence is HSEEANFESPKKRQ.

The protein belongs to the eukaryotic RPA43 RNA polymerase subunit family. As to quaternary structure, component of the RNA polymerase I (Pol I) complex consisting of 13 subunits: a ten-subunit catalytic core composed of POLR1A/RPA1, POLR1B/RPA2, POLR1C/RPAC1, POLR1D/RPAC2, POLR1H/RPA12, POLR2E/RPABC1, POLR2F/RPABC2, POLR2H/RPABC3, POLR2K/RPABC4 and POLR2L/RPABC5; a mobile stalk subunit POLR1F/RPA43 protruding from the core and additional subunits homologous to general transcription factors POLR1E/RPA49 and POLR1G/RPA34. Interacts with RRN3/TIF-IA. Interacts with RRN3/TIF-IA. In terms of tissue distribution, widely expressed.

It is found in the nucleus. Its subcellular location is the nucleolus. Component of RNA polymerase I (Pol I), a DNA-dependent RNA polymerase which synthesizes ribosomal RNA precursors using the four ribonucleoside triphosphates as substrates. Through its association with RRN3/TIF-IA may be involved in recruitment of Pol I to rDNA promoters. In Mus musculus (Mouse), this protein is DNA-directed RNA polymerase I subunit RPA43.